Reading from the N-terminus, the 821-residue chain is Phenylalanine--tRNA ligase beta subunit (821 aa).

The tRNA-binding domain maps to 39–149 (RTWAEGVVVG…DAVTVGEDVR (111 aa)). The 95-residue stretch at 409–503 (PLERTLTLRL…RLYGYDRFEE (95 aa)) folds into the B5 domain. The Mg(2+) site is built by D481, D487, E490, and E491. Residues 724-820 (STYPASDRDL…LVEKYAVTLR (97 aa)) form the FDX-ACB domain.

Belongs to the phenylalanyl-tRNA synthetase beta subunit family. Type 1 subfamily. In terms of assembly, tetramer of two alpha and two beta subunits. Mg(2+) serves as cofactor.

The protein resides in the cytoplasm. It carries out the reaction tRNA(Phe) + L-phenylalanine + ATP = L-phenylalanyl-tRNA(Phe) + AMP + diphosphate + H(+). The protein is Phenylalanine--tRNA ligase beta subunit of Thermosynechococcus vestitus (strain NIES-2133 / IAM M-273 / BP-1).